A 207-amino-acid chain; its full sequence is Glutathione S-transferase P (207 aa).

Residues 1 to 78 (PPYTITYFPV…HLGRSFGLYG (78 aa)) enclose the GST N-terminal domain. Residue Tyr-3 is modified to Phosphotyrosine; by EGFR. Glutathione is bound by residues Tyr-7, Arg-13, Trp-38, Lys-42, and 49-50 (QL). Thr-59 carries the post-translational modification Phosphothreonine. 62–63 (QS) contacts glutathione. In terms of domain architecture, GST C-terminal spans 80 to 201 (DQKEAALVDM…ASPEHVNRPI (122 aa)). N6-succinyllysine occurs at positions 100 and 113. N6-acetyllysine is present on Lys-125.

This sequence belongs to the GST superfamily. Pi family. Homodimer. Interacts with CDK5.

It localises to the cytoplasm. It is found in the mitochondrion. The protein localises to the nucleus. It catalyses the reaction RX + glutathione = an S-substituted glutathione + a halide anion + H(+). The catalysed reaction is prostaglandin J2 + glutathione = prostaglandin J2-S-(R)-glutathione. The enzyme catalyses prostaglandin J2 + glutathione = prostaglandin J2-S-(S)-glutathione. It carries out the reaction prostaglandin A2 + glutathione = prostaglandin A2-S-(S)-glutathione. It catalyses the reaction 11(S)-hydroxy-14(S),15(S)-epoxy-(5Z,8Z,12E)-eicosatrienoate + glutathione = (11S,15S)-dihydroxy-14(R)-S-glutathionyl-(5Z,8Z,12E)-eicosatrienoate. Conjugation of reduced glutathione to a wide number of exogenous and endogenous hydrophobic electrophiles. Involved in the formation of glutathione conjugates of both prostaglandin A2 (PGA2) and prostaglandin J2 (PGJ2). Participates in the formation of novel hepoxilin regioisomers. Negatively regulates CDK5 activity via p25/p35 translocation to prevent neurodegeneration. The polypeptide is Glutathione S-transferase P (GSTP1) (Sus scrofa (Pig)).